A 1094-amino-acid chain; its full sequence is Probable arabinosyltransferase C (1094 aa).

The next 13 helical transmembrane spans lie at 28–50 (IARYVAVVAGLLGAVLAIATPLL), 232–251 (AAMILGVALTGAALVALHIL), 264–286 (PARWWSTGGLDTLVIAVLVWWHF), 341–360 (SIWMRLPTLAMALTCWWVIS), 373–392 (TSRAAAWTAAGMFLAVWLPL), 431–453 (IGALTLFSGPTGIASIGALLVAI), 466–488 (RFGVLPLVAPILAAATVTAIPIF), 530–552 (SIARRFAVLALVLALAVSVAMSL), 565–582 (SRRIIGITIISFLAMMFT), 586–608 (WTHHFGVFAGLAGSLGALAAVAV), 620–642 (TVFAAVVVFVLALSFASVNGWWY), 657–679 (WRWSLTTALLELTVLVLLLAAWF), and 700–722 (LAGIVQSPLAIATWLLVLFEVVS). Residues 817–831 (GSEPGTEGGTTAAPG) show a composition bias toward low complexity. Positions 817-836 (GSEPGTEGGTTAAPGINGSR) are disordered.

It belongs to the emb family.

It is found in the cell membrane. Its function is as follows. Arabinosyl transferase responsible for the polymerization of arabinose into the arabinan of arabinogalactan. The protein is Probable arabinosyltransferase C (embC) of Mycobacterium tuberculosis (strain ATCC 25618 / H37Rv).